Reading from the N-terminus, the 1412-residue chain is DNA-directed RNA polymerase subunit beta' (1412 aa).

Residues C71, C73, C86, and C89 each contribute to the Zn(2+) site. Mg(2+) contacts are provided by D461, D463, and D465. Zn(2+) is bound by residues C815, C889, C896, and C899.

This sequence belongs to the RNA polymerase beta' chain family. As to quaternary structure, the RNAP catalytic core consists of 2 alpha, 1 beta, 1 beta' and 1 omega subunit. When a sigma factor is associated with the core the holoenzyme is formed, which can initiate transcription. Mg(2+) is required as a cofactor. Requires Zn(2+) as cofactor.

It carries out the reaction RNA(n) + a ribonucleoside 5'-triphosphate = RNA(n+1) + diphosphate. In terms of biological role, DNA-dependent RNA polymerase catalyzes the transcription of DNA into RNA using the four ribonucleoside triphosphates as substrates. This chain is DNA-directed RNA polymerase subunit beta', found in Actinobacillus pleuropneumoniae serotype 5b (strain L20).